The following is a 367-amino-acid chain: tRNA-specific 2-thiouridylase MnmA (367 aa).

Residues 14–21 (AMSGGVDS) and Leu-40 each bind ATP. The Nucleophile role is filled by Cys-108. An intrachain disulfide couples Cys-108 to Cys-204. Gly-132 provides a ligand contact to ATP. Positions 154 to 156 (KDQ) are interaction with tRNA. The active-site Cysteine persulfide intermediate is the Cys-204.

It belongs to the MnmA/TRMU family.

It localises to the cytoplasm. It carries out the reaction S-sulfanyl-L-cysteinyl-[protein] + uridine(34) in tRNA + AH2 + ATP = 2-thiouridine(34) in tRNA + L-cysteinyl-[protein] + A + AMP + diphosphate + H(+). Its function is as follows. Catalyzes the 2-thiolation of uridine at the wobble position (U34) of tRNA, leading to the formation of s(2)U34. This is tRNA-specific 2-thiouridylase MnmA from Rickettsia bellii (strain OSU 85-389).